A 441-amino-acid chain; its full sequence is Zinc finger protein ZIC 3 (441 aa).

A C2H2-type 1; atypical zinc finger spans residues 222–257 (LSCKWLEESPMNRPQKTCDRTFSSMHELVTHMTMEH). A C2H2-type 2; atypical zinc finger spans residues 266–293 (HICYWEECPRGGKSFKAKYKLVNHIRVH). C2H2-type zinc fingers lie at residues 299 to 323 (FPCPFPGCGKIFARSENLKIHKRTH), 329 to 353 (FKCEFEGCDRRFANSSDRKKHMHVH), and 359 to 381 (YICKVCDKSYTHPSSLRKHMKVH). Positions 375-441 (RKHMKVHESQ…LPPNFNEWYV (67 aa)) are disordered. Over residues 383–399 (SQGSDSSPAASSGYESA) the composition is skewed to low complexity. Positions 406–429 (SANSEEPSKNSSATHQTNNSSHNT) are enriched in polar residues.

It belongs to the GLI C2H2-type zinc-finger protein family.

Its subcellular location is the nucleus. The protein resides in the cytoplasm. Functionally, probably acts as a transcriptional activator. May bind to the minimal GLI-consensus sequence 5'-GGGTGGTC-3'. Can determine the ectodermal cell fate and promote the earliest step of neural and neural crest development. Involved in establishing left-right asymmetry in the embryo. The polypeptide is Zinc finger protein ZIC 3 (zic3) (Xenopus tropicalis (Western clawed frog)).